Reading from the N-terminus, the 273-residue chain is Nitrogenase iron protein (273 aa).

Residue 8–15 coordinates ATP; that stretch reads GKGGIGKS. Cysteine 95 contributes to the [4Fe-4S] cluster binding site. Arginine 98 bears the ADP-ribosylarginine; by dinitrogenase reductase ADP-ribosyltransferase mark. Cysteine 130 contacts [4Fe-4S] cluster.

Belongs to the NifH/BchL/ChlL family. Homodimer. The cofactor is [4Fe-4S] cluster. Post-translationally, the reversible ADP-ribosylation of Arg-98 inactivates the nitrogenase reductase and regulates nitrogenase activity.

It catalyses the reaction N2 + 8 reduced [2Fe-2S]-[ferredoxin] + 16 ATP + 16 H2O = H2 + 8 oxidized [2Fe-2S]-[ferredoxin] + 2 NH4(+) + 16 ADP + 16 phosphate + 6 H(+). Its function is as follows. The key enzymatic reactions in nitrogen fixation are catalyzed by the nitrogenase complex, which has 2 components: the iron protein and the molybdenum-iron protein. The polypeptide is Nitrogenase iron protein (Roseiflexus castenholzii (strain DSM 13941 / HLO8)).